Here is a 249-residue protein sequence, read N- to C-terminus: Probable endopeptidase YafL (249 aa).

The first 17 residues, 1-17 (MSLPSIPSFVLSGLLLI), serve as a signal peptide directing secretion. Cys-18 carries N-palmitoyl cysteine lipidation. A lipid anchor (S-diacylglycerol cysteine) is attached at Cys-18. The region spanning 116-243 (HNITEVAIHR…DHFLGARRIL (128 aa)) is the NlpC/P60 domain. The Nucleophile role is filled by Cys-147. His-202 acts as the Proton acceptor in catalysis. Glu-214 is an active-site residue.

It belongs to the peptidase C40 family.

Its subcellular location is the cell membrane. This chain is Probable endopeptidase YafL (yafL), found in Escherichia coli (strain K12).